We begin with the raw amino-acid sequence, 1460 residues long: DNA-directed RNA polymerase III subunit RPC1 (1460 aa).

Residues C67, C70, C77, H80, C107, C110, and C154 each coordinate Zn(2+). D511, D513, and D515 together coordinate Mg(2+). Residues 858–870 (PPEFLFHAISGRE) are bridging helix.

Belongs to the RNA polymerase beta' chain family. Component of the RNA polymerase III (Pol III) complex consisting of 17 subunits.

It is found in the nucleus. The catalysed reaction is RNA(n) + a ribonucleoside 5'-triphosphate = RNA(n+1) + diphosphate. DNA-dependent RNA polymerase catalyzes the transcription of DNA into RNA using the four ribonucleoside triphosphates as substrates. Largest and catalytic core component of RNA polymerase III which synthesizes small RNAs, such as 5S rRNA and tRNAs. Forms the polymerase active center together with the second largest subunit. A single-stranded DNA template strand of the promoter is positioned within the central active site cleft of Pol III. A bridging helix emanates from RPC1 and crosses the cleft near the catalytic site and is thought to promote translocation of Pol III by acting as a ratchet that moves the RNA-DNA hybrid through the active site by switching from straight to bent conformations at each step of nucleotide addition. This is DNA-directed RNA polymerase III subunit RPC1 (RPO31) from Saccharomyces cerevisiae (strain ATCC 204508 / S288c) (Baker's yeast).